A 275-amino-acid chain; its full sequence is Calcyphosin (275 aa).

The tract at residues 59 to 87 (PGTTQLTQGPAGRTLGQTQASCPEPRPSM) is disordered. EF-hand domains follow at residues 107-142 (SGIQGLARFFRQLDRDGSRSLDADEFRQGLAKLGLV), 143-178 (LDQAEAEGVCRKWDRNGSGTLDLEEFLRALRPPMSQ), 179-214 (AREAVIAAAFAKLDRSGDGVVTVDDLRGVYSGRAHP), and 222-258 (TEDEVLRRFLDNFDSSEKDGQVTLAEFQDYYSGVSAS). D120, D122, S124, S126, E131, D156, N158, S160, T162, E167, D192, S194, D196, and D203 together coordinate Ca(2+). A Phosphoserine; by PKA modification is found at S126.

Monomer. Does not form oligomers in the presence of calcium.

It localises to the cytoplasm. In terms of biological role, calcium-binding protein. May play a role in cellular signaling events (Potential). The polypeptide is Calcyphosin (Homo sapiens (Human)).